Consider the following 499-residue polypeptide: MKKKYILAIDQGTTSSRAILFDQKGHIAGMAQREFTQIFPQPGWVEHNPRDIMTSVYTTITELLNNTQIDVRAIAGIGITNQRETTVIWDRQTGQPIYNAIVWQSRQTKDICDQLTTAGYQDLVHAKTGLLIDAYFSGTKVKWILDHVENAHTQATRGELAFGTIDTWIIWNLTGGQVHVTDYSNASRTLLYDIHALRWDPDLLTMLDIPAAILPDVRSSSDIYGLTQTPYFHGEQIPIAGIAGDQQAALFGQACFEPGMAKNTYGTGCFMLMHTGKKAVESKNGLLTTIAWGLNGEIEYALEGSIFVAGSVVQWLRDGLRMFGKASDSQAYADRVSDNGGVYVVPAFVGLGAPYWRSDVRGAVFGLTRSTTKEHFIRAALESMAYQTRDVLSAMQADAGMELKELRTDGAAITNDFMAQFQSDILAVPVLRSEIAETTALGAAYLAGLATGFWSSREEITQHWAINLCFKPQMDKQQREHLYAGWKQAVAATLGFRVA.

ADP is bound at residue T13. 3 residues coordinate ATP: T13, T14, and S15. Position 13 (T13) interacts with sn-glycerol 3-phosphate. R17 is an ADP binding site. Positions 83, 84, 135, and 245 each coordinate sn-glycerol 3-phosphate. The glycerol site is built by R83, E84, Y135, D245, and Q246. T267 and G310 together coordinate ADP. Positions 267, 310, 314, and 411 each coordinate ATP. Positions 411 and 415 each coordinate ADP.

Belongs to the FGGY kinase family.

It catalyses the reaction glycerol + ATP = sn-glycerol 3-phosphate + ADP + H(+). The protein operates within polyol metabolism; glycerol degradation via glycerol kinase pathway; sn-glycerol 3-phosphate from glycerol: step 1/1. With respect to regulation, inhibited by fructose 1,6-bisphosphate (FBP). Functionally, key enzyme in the regulation of glycerol uptake and metabolism. Catalyzes the phosphorylation of glycerol to yield sn-glycerol 3-phosphate. This Xylella fastidiosa (strain 9a5c) protein is Glycerol kinase.